Consider the following 656-residue polypeptide: Leucine aminopeptidase 2 (656 aa).

Substrate is bound by residues 173–175 and 302–307; these read QLE and PYGGME. Zn(2+) is bound at residue H331. E332 serves as the catalytic Proton acceptor. Residues H335 and E354 each coordinate Zn(2+). The active-site Proton donor is the Y420.

This sequence belongs to the peptidase M1 family. It depends on Zn(2+) as a cofactor.

It localises to the cytoplasm. The protein resides in the nucleus. The enzyme catalyses an epoxide + H2O = an ethanediol. Aminopeptidase that preferentially cleaves di- and tripeptides. Also has low epoxide hydrolase activity (in vitro). Can hydrolyze the epoxide leukotriene LTA(4) but it forms preferentially 5,6-dihydroxy-7,9,11,14-eicosatetraenoic acid rather than the cytokine leukotriene B(4) as the product compared to the homologous mammalian enzyme (in vitro). This is Leucine aminopeptidase 2 from Vanderwaltozyma polyspora (strain ATCC 22028 / DSM 70294 / BCRC 21397 / CBS 2163 / NBRC 10782 / NRRL Y-8283 / UCD 57-17) (Kluyveromyces polysporus).